Here is a 99-residue protein sequence, read N- to C-terminus: Signal recognition particle 19 kDa protein (99 aa).

This sequence belongs to the SRP19 family. Part of the signal recognition particle protein translocation system, which is composed of SRP and FtsY. Archaeal SRP consists of a 7S RNA molecule of 300 nucleotides and two protein subunits: SRP54 and SRP19.

The protein resides in the cytoplasm. In terms of biological role, involved in targeting and insertion of nascent membrane proteins into the cytoplasmic membrane. Binds directly to 7S RNA and mediates binding of the 54 kDa subunit of the SRP. In Pyrococcus abyssi (strain GE5 / Orsay), this protein is Signal recognition particle 19 kDa protein.